We begin with the raw amino-acid sequence, 189 residues long: dCTP deaminase (189 aa).

Residues 112–117 (KSTYAR), 136–138 (TLE), Q157, Y171, and Q181 each bind dCTP. The active-site Proton donor/acceptor is the E138.

The protein belongs to the dCTP deaminase family. Homotrimer.

It catalyses the reaction dCTP + H2O + H(+) = dUTP + NH4(+). Its pathway is pyrimidine metabolism; dUMP biosynthesis; dUMP from dCTP (dUTP route): step 1/2. Its function is as follows. Catalyzes the deamination of dCTP to dUTP. The protein is dCTP deaminase of Methylacidiphilum infernorum (isolate V4) (Methylokorus infernorum (strain V4)).